A 351-amino-acid polypeptide reads, in one-letter code: Transcription factor bHLH93 (351 aa).

One can recognise a bHLH domain in the interval G174–L223.

In terms of assembly, homodimer. Interacts with FAMA. Broadly expressed.

The protein resides in the nucleus. Its function is as follows. Transcription factor. May be involved in the differentiation of stomatal guard cells. The chain is Transcription factor bHLH93 (BHLH93) from Arabidopsis thaliana (Mouse-ear cress).